The sequence spans 115 residues: MPRATNKPATRRRRKKILNKAKGYWGRRSKVYKVAKHAVEKGLQYAYRDRRQKKRRFRRLWITRINAATRQHDVSYSQFMGQYRKSDLDMNRKVLADLAVHDPDAFEQIVDHVME.

The protein belongs to the bacterial ribosomal protein bL20 family.

Binds directly to 23S ribosomal RNA and is necessary for the in vitro assembly process of the 50S ribosomal subunit. It is not involved in the protein synthesizing functions of that subunit. This Salinibacter ruber (strain DSM 13855 / M31) protein is Large ribosomal subunit protein bL20.